We begin with the raw amino-acid sequence, 875 residues long: GATOR2 complex protein MIOS (875 aa).

WD repeat units follow at residues Pro61 to Phe100, Lys111 to Ile155, Gly182 to Phe221, Asn223 to Leu261, Glu265 to Gly306, and Arg395 to Thr437. The C4-type zinc finger occupies Val735–Pro781. Positions 737 and 740 each coordinate Zn(2+). Residues Ser759 and Ser766 each carry the phosphoserine modification. Residues Cys775, Cys778, Cys788, Cys827, Cys830, His832, His835, His838, Cys849, Cys854, and Cys858 each contribute to the Zn(2+) site. Residues Leu782–Thr863 form an RING-type; atypical zinc finger.

This sequence belongs to the WD repeat mio family. As to quaternary structure, component of the GATOR2 subcomplex, composed of MIOS, SEC13, SEH1L, WDR24 and WDR59. The GATOR2 complex interacts with CASTOR1 and CASTOR2; the interaction is negatively regulated by arginine. CASTOR1 and CASTOR2 convey leucine availability via direct interaction with MIOS. The GATOR2 complex interacts with SESN1, SESN2 and SESN3; the interaction is negatively regulated by amino acids. Interacts with SAR1A and SAR1B; the interaction is direct, disrupted by leucine and mediates the interaction of SAR1A or SAR1B with the GATOR2 complex to negatively regulate the TORC1 signaling upon leucine deprivation.

The protein resides in the lysosome membrane. With respect to regulation, the GATOR2 complex is negatively regulated by the upstream amino acid sensors CASTOR1 and SESN2, which sequester the GATOR2 complex in absence of amino acids. In the presence of abundant amino acids, GATOR2 is released from CASTOR1 and SESN2 and activated. As a component of the GATOR2 complex, functions as an activator of the amino acid-sensing branch of the mTORC1 signaling pathway. The GATOR2 complex indirectly activates mTORC1 through the inhibition of the GATOR1 subcomplex. GATOR2 probably acts as an E3 ubiquitin-protein ligase toward GATOR1. In the presence of abundant amino acids, the GATOR2 complex mediates ubiquitination of the NPRL2 core component of the GATOR1 complex, leading to GATOR1 inactivation. In the absence of amino acids, GATOR2 is inhibited, activating the GATOR1 complex. Within the GATOR2 complex, MIOS is required to prevent autoubiquitination of WDR24, the catalytic subunit of the complex. The GATOR2 complex is required for brain myelination. The chain is GATOR2 complex protein MIOS from Pongo abelii (Sumatran orangutan).